Reading from the N-terminus, the 248-residue chain is Anamorsin homolog (248 aa).

Residues 4–129 form an N-terminal SAM-like domain region; it reads FKGLQKSLYI…ETGSSARLSF (126 aa). Residues 130–161 form a linker region; it reads AKKNANAVNVWKISGDDEELIDEEELLDEEDK. [2Fe-2S] cluster is bound by residues Cys172, Cys181, Cys184, and Cys186. Residues 172 to 186 are fe-S binding site A; it reads CSTTGKRKACKNCSC. The [4Fe-4S] cluster site is built by Cys209, Cys212, Cys220, and Cys223. 2 consecutive short sequence motifs (cx2C motif) follow at residues 209-212 and 220-223; these read CGNC and CSTC. A fe-S binding site B region spans residues 209-223; it reads CGNCYLGDAFRCSTC.

Belongs to the anamorsin family. In terms of assembly, monomer. [2Fe-2S] cluster serves as cofactor. The cofactor is [4Fe-4S] cluster.

It localises to the cytoplasm. The protein resides in the mitochondrion intermembrane space. In terms of biological role, component of the cytosolic iron-sulfur (Fe-S) protein assembly (CIA) machinery. Required for the maturation of extramitochondrial Fe-S proteins. Part of an electron transfer chain functioning in an early step of cytosolic Fe-S biogenesis, facilitating the de novo assembly of a [4Fe-4S] cluster on the cytosolic Fe-S scaffold complex. Electrons are transferred from NADPH via a FAD- and FMN-containing diflavin oxidoreductase. Together with the diflavin oxidoreductase, also required for the assembly of the diferric tyrosyl radical cofactor of ribonucleotide reductase (RNR), probably by providing electrons for reduction during radical cofactor maturation in the catalytic small subunit. The sequence is that of Anamorsin homolog from Drosophila simulans (Fruit fly).